The following is a 251-amino-acid chain: Small ribosomal subunit protein uS3 (251 aa).

Residues 39–109 (IRNYVLARLK…EVKIDVVEVI (71 aa)) enclose the KH type-2 domain. The span at 221 to 239 (EMKRMKDRRADSKSRPRDP) shows a compositional bias: basic and acidic residues. A disordered region spans residues 221 to 251 (EMKRMKDRRADSKSRPRDPRSKRRRSRTKRA). A compositionally biased stretch (basic residues) spans 240–251 (RSKRRRSRTKRA).

Belongs to the universal ribosomal protein uS3 family. In terms of assembly, part of the 30S ribosomal subunit. Forms a tight complex with proteins S10 and S14.

Binds the lower part of the 30S subunit head. Binds mRNA in the 70S ribosome, positioning it for translation. The sequence is that of Small ribosomal subunit protein uS3 from Chlorobium limicola (strain DSM 245 / NBRC 103803 / 6330).